Here is a 428-residue protein sequence, read N- to C-terminus: Adenylosuccinate synthetase (428 aa).

Residues 12-18 and 40-42 each bind GTP; these read GDEGKGK and GHT. Catalysis depends on Asp13, which acts as the Proton acceptor. 2 residues coordinate Mg(2+): Asp13 and Gly40. IMP-binding positions include 13–16, 38–41, Thr129, Arg143, Gln224, Thr239, and Arg303; these read DEGK and NAGH. His41 serves as the catalytic Proton donor. 299–305 is a substrate binding site; the sequence is VTTGRIR. GTP-binding positions include Arg305, 331–333, and 410–412; these read KVD and AYG.

It belongs to the adenylosuccinate synthetase family. Homodimer. Requires Mg(2+) as cofactor.

Its subcellular location is the cytoplasm. It carries out the reaction IMP + L-aspartate + GTP = N(6)-(1,2-dicarboxyethyl)-AMP + GDP + phosphate + 2 H(+). It functions in the pathway purine metabolism; AMP biosynthesis via de novo pathway; AMP from IMP: step 1/2. Plays an important role in the de novo pathway of purine nucleotide biosynthesis. Catalyzes the first committed step in the biosynthesis of AMP from IMP. This Francisella philomiragia subsp. philomiragia (strain ATCC 25017 / CCUG 19701 / FSC 153 / O#319-036) protein is Adenylosuccinate synthetase.